The following is a 138-amino-acid chain: Basic phospholipase A2 Bs-N6 (138 aa).

An N-terminal signal peptide occupies residues 1–16 (MRTLWIVAVLLVGVEG). Intrachain disulfides connect Cys-42-Cys-131, Cys-44-Cys-60, Cys-59-Cys-111, Cys-65-Cys-138, Cys-66-Cys-104, Cys-73-Cys-97, and Cys-91-Cys-102. The Ca(2+) site is built by Tyr-43, Gly-45, and Gly-47. His-63 is an active-site residue. Asp-64 is a binding site for Ca(2+). Asp-105 is an active-site residue.

Monomer. Ca(2+) serves as cofactor. Post-translationally, contains 7 disulfide bonds. As to expression, expressed by the venom gland.

Its subcellular location is the secreted. The catalysed reaction is a 1,2-diacyl-sn-glycero-3-phosphocholine + H2O = a 1-acyl-sn-glycero-3-phosphocholine + a fatty acid + H(+). Functionally, snake venom phospholipase A2 (PLA2) that shows myotoxic activities. PLA2 catalyzes the calcium-dependent hydrolysis of the 2-acyl groups in 3-sn-phosphoglycerides. This chain is Basic phospholipase A2 Bs-N6, found in Bothriechis schlegelii (Eyelash palm pitviper).